Reading from the N-terminus, the 620-residue chain is MKKPVKNIKKQKAQNQTKNIKKQLKEEVNTGLIDGIFVYTEPLSILEFATKINKPVTVILKHYFNQGLLLNQNTLLTEEQMGELCLEFGFDFKKETSVTKENILETLLDTVDDEKHLKERPPIVTIMGHVDHGKTTLLDSIKNSNVVASEAGGITQAIGAYQITTKNNKKITFIDTPGHEAFTEMRSRGANVTDIVVLIVAADDGVMPQTEEAIDHAKLANVPIIVFINKIDKPGSDPNRVKTELMKYGLVAEEFGGDIPFIEGSAIKKINLDKLEDTIILISELENLKANPDRFASGVVLEAHLDKAKGPVASVLVQQGSLEIKDIMVVGTTFGSIKHIEDEFKHKVLKAEPSKPVVVYGLNQVPKAGDKFVVINDEKMAREISEAQLKKQQEEERRTKQAFTLDAIKQHIDEGELKNITLIIKADTQGSVEALKNSLSKINISGVKINIIRASVGAISLSDISLASTVRDGLVIVYGFNVRPDAIVRKKAEEDRIEIRLHNIIYKLIEELEDAAKGILDPEIKEVVLGQAQVRALFRHSAIGTIGGFYVVDGAITRNAKIRVIRNGVVVYDGEINSLQHQKQDAKEVKAGFEGALTIKNFNDIKEGDIFEAYKLEQVK.

Positions 119-288 constitute a tr-type G domain; that stretch reads ERPPIVTIMG…IILISELENL (170 aa). The G1 stretch occupies residues 128–135; the sequence is GHVDHGKT. Position 128-135 (128-135) interacts with GTP; that stretch reads GHVDHGKT. A G2 region spans residues 153–157; that stretch reads GITQA. Residues 175–178 form a G3 region; the sequence is DTPG. GTP-binding positions include 175 to 179 and 229 to 232; these read DTPGH and NKID. Positions 229–232 are G4; the sequence is NKID. Residues 265 to 267 are G5; it reads SAI.

It belongs to the TRAFAC class translation factor GTPase superfamily. Classic translation factor GTPase family. IF-2 subfamily.

The protein resides in the cytoplasm. In terms of biological role, one of the essential components for the initiation of protein synthesis. Protects formylmethionyl-tRNA from spontaneous hydrolysis and promotes its binding to the 30S ribosomal subunits. Also involved in the hydrolysis of GTP during the formation of the 70S ribosomal complex. In Mycoplasma capricolum subsp. capricolum (strain California kid / ATCC 27343 / NCTC 10154), this protein is Translation initiation factor IF-2.